The sequence spans 157 residues: Protein Smg (157 aa).

This sequence belongs to the Smg family.

The sequence is that of Protein Smg from Escherichia coli O6:H1 (strain CFT073 / ATCC 700928 / UPEC).